We begin with the raw amino-acid sequence, 209 residues long: MKLRGLYAITDSQLLAGKFLAYVEAALDGGVTLLQYRDKSSDEARRLREAEKLRELCSRYKTQLIINDDAELAARLGVGVHLGQTDGPLTPARALLGSKAIIGSTCHSQIELAEQAAKEGASYVAFGRFFNSNTKPGAPAATVEMLAQARARVQLPICVIGGITLENAEPLVAHGADLLAVVHGLFGADSTQEVTRRARAFNDLLKISV.

4-amino-2-methyl-5-(diphosphooxymethyl)pyrimidine-binding positions include Q35–K39 and N67. The Mg(2+) site is built by D68 and D86. A 4-amino-2-methyl-5-(diphosphooxymethyl)pyrimidine-binding site is contributed by T105. S132–T134 serves as a coordination point for 2-[(2R,5Z)-2-carboxy-4-methylthiazol-5(2H)-ylidene]ethyl phosphate. K135 serves as a coordination point for 4-amino-2-methyl-5-(diphosphooxymethyl)pyrimidine. Residue G162 coordinates 2-[(2R,5Z)-2-carboxy-4-methylthiazol-5(2H)-ylidene]ethyl phosphate.

This sequence belongs to the thiamine-phosphate synthase family. The cofactor is Mg(2+).

It carries out the reaction 2-[(2R,5Z)-2-carboxy-4-methylthiazol-5(2H)-ylidene]ethyl phosphate + 4-amino-2-methyl-5-(diphosphooxymethyl)pyrimidine + 2 H(+) = thiamine phosphate + CO2 + diphosphate. The catalysed reaction is 2-(2-carboxy-4-methylthiazol-5-yl)ethyl phosphate + 4-amino-2-methyl-5-(diphosphooxymethyl)pyrimidine + 2 H(+) = thiamine phosphate + CO2 + diphosphate. The enzyme catalyses 4-methyl-5-(2-phosphooxyethyl)-thiazole + 4-amino-2-methyl-5-(diphosphooxymethyl)pyrimidine + H(+) = thiamine phosphate + diphosphate. Its pathway is cofactor biosynthesis; thiamine diphosphate biosynthesis; thiamine phosphate from 4-amino-2-methyl-5-diphosphomethylpyrimidine and 4-methyl-5-(2-phosphoethyl)-thiazole: step 1/1. Condenses 4-methyl-5-(beta-hydroxyethyl)thiazole monophosphate (THZ-P) and 2-methyl-4-amino-5-hydroxymethyl pyrimidine pyrophosphate (HMP-PP) to form thiamine monophosphate (TMP). The chain is Thiamine-phosphate synthase from Pseudomonas fluorescens (strain SBW25).